The primary structure comprises 437 residues: Enolase (437 aa).

A (2R)-2-phosphoglycerate-binding site is contributed by glutamine 162. Glutamate 204 (proton donor) is an active-site residue. Aspartate 251, glutamate 297, and aspartate 324 together coordinate Mg(2+). Residues lysine 349, arginine 378, serine 379, and lysine 400 each coordinate (2R)-2-phosphoglycerate. Catalysis depends on lysine 349, which acts as the Proton acceptor.

The protein belongs to the enolase family. Requires Mg(2+) as cofactor.

It localises to the cytoplasm. The protein resides in the secreted. It is found in the cell surface. The enzyme catalyses (2R)-2-phosphoglycerate = phosphoenolpyruvate + H2O. It participates in carbohydrate degradation; glycolysis; pyruvate from D-glyceraldehyde 3-phosphate: step 4/5. In terms of biological role, catalyzes the reversible conversion of 2-phosphoglycerate (2-PG) into phosphoenolpyruvate (PEP). It is essential for the degradation of carbohydrates via glycolysis. In Chlorobaculum parvum (strain DSM 263 / NCIMB 8327) (Chlorobium vibrioforme subsp. thiosulfatophilum), this protein is Enolase.